Consider the following 743-residue polypeptide: Inhibitor of nuclear factor kappa-B kinase subunit alpha (743 aa).

The region spanning 15–300 (WDMKDRLGTG…IDCGRPRCFM (286 aa)) is the Protein kinase domain. ATP-binding positions include 21–29 (LGTGGFGNV) and lysine 44. Aspartate 144 (proton acceptor) is an active-site residue. Residues 453 to 474 (LLRFNTNLTKMKNTMVSASQQL) are leucine-zipper. Residues 736–741 (MDFSWL) are NEMO-binding.

The protein belongs to the protein kinase superfamily. Ser/Thr protein kinase family. I-kappa-B kinase subfamily.

It localises to the cytoplasm. The protein localises to the nucleus. The enzyme catalyses L-seryl-[I-kappa-B protein] + ATP = O-phospho-L-seryl-[I-kappa-B protein] + ADP + H(+). Activated when phosphorylated and inactivated when dephosphorylated. Its function is as follows. Phosphorylates inhibitors of NF-kappa-B thus leading to the dissociation of the inhibitor/NF-kappa-B complex and ultimately the degradation of the inhibitor. Phosphorylates 'Ser-10' of histone H3 at NF-kappa-B-regulated promoters during inflammatory responses triggered by cytokines. This is Inhibitor of nuclear factor kappa-B kinase subunit alpha (chuk) from Xenopus laevis (African clawed frog).